A 175-amino-acid chain; its full sequence is Peptide deformylase (175 aa).

Positions 96 and 138 each coordinate Fe cation. Residue Glu139 is part of the active site. His142 serves as a coordination point for Fe cation.

Belongs to the polypeptide deformylase family. The cofactor is Fe(2+).

It carries out the reaction N-terminal N-formyl-L-methionyl-[peptide] + H2O = N-terminal L-methionyl-[peptide] + formate. In terms of biological role, removes the formyl group from the N-terminal Met of newly synthesized proteins. Requires at least a dipeptide for an efficient rate of reaction. N-terminal L-methionine is a prerequisite for activity but the enzyme has broad specificity at other positions. The protein is Peptide deformylase of Rhodopseudomonas palustris (strain BisB18).